The chain runs to 884 residues: Translation initiation factor IF-2 (884 aa).

2 disordered regions span residues 42-62 (DVQK…QEEV) and 123-254 (EPKG…GGKK). The segment covering 194–212 (PAERREVVIPPKRKMEERA) has biased composition (basic and acidic residues). Residues 234–248 (EPETPAGGAPGAKKG) are compositionally biased toward low complexity. Positions 384–553 (KRPPVVTIMG…LLQADVMDLK (170 aa)) constitute a tr-type G domain. Residues 393–400 (GHVDHGKT) form a G1 region. 393-400 (GHVDHGKT) is a GTP binding site. The tract at residues 418–422 (GITQH) is G2. The tract at residues 439–442 (DTPG) is G3. Residues 439-443 (DTPGH) and 493-496 (NKID) contribute to the GTP site. A G4 region spans residues 493-496 (NKID). Residues 529–531 (SAK) are G5.

The protein belongs to the TRAFAC class translation factor GTPase superfamily. Classic translation factor GTPase family. IF-2 subfamily.

It localises to the cytoplasm. One of the essential components for the initiation of protein synthesis. Protects formylmethionyl-tRNA from spontaneous hydrolysis and promotes its binding to the 30S ribosomal subunits. Also involved in the hydrolysis of GTP during the formation of the 70S ribosomal complex. This is Translation initiation factor IF-2 from Geobacter metallireducens (strain ATCC 53774 / DSM 7210 / GS-15).